We begin with the raw amino-acid sequence, 248 residues long: Killer cell lectin-like receptor subfamily I member 1 (248 aa).

Residues 1-80 are Cytoplasmic-facing; that stretch reads MLHSKRREYT…RQGPKSTVWR (80 aa). 2 short sequence motifs (ITIM motif) span residues 16–21 and 47–52; these read VTYTEL and LKYGEL. The chain crosses the membrane as a helical; Signal-anchor for type II membrane protein span at residues 81–101; sequence VVTGMLGALCVVLMTTTGILL. Topologically, residues 102 to 248 are extracellular; it reads PKLFSSQEEQ…KKSYICEFNI (147 aa). 3 disulfides stabilise this stretch: cysteine 132–cysteine 145, cysteine 161–cysteine 244, and cysteine 223–cysteine 236. Residues 139–245 form the C-type lectin domain; it reads FGNNFYCVFK…CSAKKSYICE (107 aa). N-linked (GlcNAc...) asparagine glycosylation is found at asparagine 197, asparagine 214, and asparagine 220.

As to quaternary structure, heterodimer with KLRE1. Interacts with PTPN6. Expressed in natural killer (NK) cells.

The protein resides in the cell membrane. Its function is as follows. Lectin-like receptor for natural killer (NK) cells. Heterodimer formation with KLRE1 mediates inhibition of NK cell cytolytic activity. This chain is Killer cell lectin-like receptor subfamily I member 1, found in Mus musculus (Mouse).